A 426-amino-acid chain; its full sequence is Serine--tRNA ligase (426 aa).

T230–E232 provides a ligand contact to L-serine. R261 to E263 contributes to the ATP binding site. E284 provides a ligand contact to L-serine. Residue E348–S351 participates in ATP binding. Position 384 (S384) interacts with L-serine.

Belongs to the class-II aminoacyl-tRNA synthetase family. Type-1 seryl-tRNA synthetase subfamily. Homodimer. The tRNA molecule binds across the dimer.

Its subcellular location is the cytoplasm. The catalysed reaction is tRNA(Ser) + L-serine + ATP = L-seryl-tRNA(Ser) + AMP + diphosphate + H(+). The enzyme catalyses tRNA(Sec) + L-serine + ATP = L-seryl-tRNA(Sec) + AMP + diphosphate + H(+). It participates in aminoacyl-tRNA biosynthesis; selenocysteinyl-tRNA(Sec) biosynthesis; L-seryl-tRNA(Sec) from L-serine and tRNA(Sec): step 1/1. Catalyzes the attachment of serine to tRNA(Ser). Is also able to aminoacylate tRNA(Sec) with serine, to form the misacylated tRNA L-seryl-tRNA(Sec), which will be further converted into selenocysteinyl-tRNA(Sec). The protein is Serine--tRNA ligase of Streptococcus mutans serotype c (strain ATCC 700610 / UA159).